A 327-amino-acid polypeptide reads, in one-letter code: DNA-directed RNA polymerase subunit alpha (327 aa).

The interval 1 to 233 (MVREKVKVST…NLFIPFLHVE (233 aa)) is alpha N-terminal domain (alpha-NTD). Residues 265 to 327 (KELAFQYIFI…KKILDILEKK (63 aa)) are alpha C-terminal domain (alpha-CTD).

The protein belongs to the RNA polymerase alpha chain family. As to quaternary structure, in plastids the minimal PEP RNA polymerase catalytic core is composed of four subunits: alpha, beta, beta', and beta''. When a (nuclear-encoded) sigma factor is associated with the core the holoenzyme is formed, which can initiate transcription.

It localises to the plastid. The protein resides in the chloroplast. It carries out the reaction RNA(n) + a ribonucleoside 5'-triphosphate = RNA(n+1) + diphosphate. Functionally, DNA-dependent RNA polymerase catalyzes the transcription of DNA into RNA using the four ribonucleoside triphosphates as substrates. The chain is DNA-directed RNA polymerase subunit alpha from Olimarabidopsis pumila (Dwarf rocket).